We begin with the raw amino-acid sequence, 121 residues long: Small ribosomal subunit protein uS13 (121 aa).

A disordered region spans residues 97–121 (VRGQRTRTNARTRRGARKTVAGRKK). The span at 100 to 121 (QRTRTNARTRRGARKTVAGRKK) shows a compositional bias: basic residues.

It belongs to the universal ribosomal protein uS13 family. In terms of assembly, part of the 30S ribosomal subunit. Forms a loose heterodimer with protein S19. Forms two bridges to the 50S subunit in the 70S ribosome.

Its function is as follows. Located at the top of the head of the 30S subunit, it contacts several helices of the 16S rRNA. In the 70S ribosome it contacts the 23S rRNA (bridge B1a) and protein L5 of the 50S subunit (bridge B1b), connecting the 2 subunits; these bridges are implicated in subunit movement. Contacts the tRNAs in the A and P-sites. The polypeptide is Small ribosomal subunit protein uS13 (Prochlorococcus marinus (strain NATL1A)).